The following is a 715-amino-acid chain: Polyribonucleotide nucleotidyltransferase (715 aa).

Asp493 and Asp499 together coordinate Mg(2+). The KH domain maps to 560–619 (PRMITIKINPEKIRDVIGKGGSVIRALTEETGTTIDISDDGVVTIASTNSDGMAEAKKRI). An S1 motif domain is found at 629–697 (GQVYEGTVLK…EKGRVRLSAK (69 aa)).

It belongs to the polyribonucleotide nucleotidyltransferase family. Requires Mg(2+) as cofactor.

The protein resides in the cytoplasm. The catalysed reaction is RNA(n+1) + phosphate = RNA(n) + a ribonucleoside 5'-diphosphate. Its function is as follows. Involved in mRNA degradation. Catalyzes the phosphorolysis of single-stranded polyribonucleotides processively in the 3'- to 5'-direction. The sequence is that of Polyribonucleotide nucleotidyltransferase from Burkholderia lata (strain ATCC 17760 / DSM 23089 / LMG 22485 / NCIMB 9086 / R18194 / 383).